We begin with the raw amino-acid sequence, 664 residues long: Frizzled-3 (664 aa).

A signal peptide spans 1–16; sequence MAAYLISFIWVSVILA. At 17-204 the chain is on the extracellular side; it reads QKSMGHSLFA…REELSFARYF (188 aa). Positions 22-135 constitute an FZ domain; sequence HSLFACEPIT…CSRFPDCDEP (114 aa). Cystine bridges form between cysteine 27–cysteine 88, cysteine 35–cysteine 81, cysteine 72–cysteine 109, cysteine 98–cysteine 132, and cysteine 102–cysteine 126. The N-linked (GlcNAc...) asparagine glycan is linked to asparagine 41. Residues 205 to 225 form a helical membrane-spanning segment; sequence IGVISIVCLSATLFTFLTFLI. At 226–236 the chain is on the cytoplasmic side; the sequence is DVTRFRYPERP. The chain crosses the membrane as a helical span at residues 237–257; that stretch reads IIFYAVCYMMVSLIFFIGFLL. Over 258 to 287 the chain is Extracellular; the sequence is EDKVACNGANPSQYKASTVTQGSHNKACTM. A helical transmembrane segment spans residues 288–308; it reads LFMVLYFFTMAGSVWWVILTI. Residues 309–327 are Cytoplasmic-facing; the sequence is TWFLAAVPKWGSEAIEKKA. Residues 328 to 348 traverse the membrane as a helical segment; it reads LLFHASAWGIPGTLTIILLAM. Over 349-373 the chain is Extracellular; sequence NKIEGDNISGVCFVGLYDVHALRYF. Asparagine 355 carries N-linked (GlcNAc...) asparagine glycosylation. A helical membrane pass occupies residues 374–394; it reads VLAPLCLDVVVGVSLLLAGII. Topologically, residues 395–419 are cytoplasmic; the sequence is SLNRVRIEIPLEKENQDKLVKFMIR. The helical transmembrane segment at 420–440 threads the bilayer; sequence IGVFSILYLVPLLVVIGCYFY. Topologically, residues 441–476 are extracellular; sequence EQAYRGVWETTWVQERCREYHIPCPYKVTQTSRPDL. Residues 477–497 form a helical membrane-spanning segment; that stretch reads ILFLMKYLMLLVVGIPSVFWV. The Cytoplasmic portion of the chain corresponds to 498-664; sequence GSKKTCFEWA…RVIEADATSA (167 aa). The Lys-Thr-X-X-X-Trp motif, mediates interaction with the PDZ domain of Dvl family members motif lies at 501-506; the sequence is KTCFEW. Positions 537-664 are disordered; it reads RDPNTPIVRK…RVIEADATSA (128 aa). Composition is skewed to polar residues over residues 549 to 564 and 573 to 585; these read GTST…STQL and KAGS…SSYH.

It belongs to the G-protein coupled receptor Fz/Smo family. As to expression, expression restricted to the early nervous system.

It localises to the membrane. Its subcellular location is the cell membrane. The protein localises to the cell surface. The protein resides in the apical cell membrane. In terms of biological role, receptor for Wnt proteins. Most of frizzled receptors are coupled to the beta-catenin canonical signaling pathway, which leads to the activation of disheveled proteins, inhibition of GSK-3 kinase, nuclear accumulation of beta-catenin and activation of Wnt target genes. A second signaling pathway involving PKC and calcium fluxes has been seen for some family members, but it is not yet clear if it represents a distinct pathway or if it can be integrated in the canonical pathway, as PKC seems to be required for Wnt-mediated inactivation of GSK-3 kinase. Both pathways seem to involve interactions with G-proteins. Activated by Wnt8. Involved in transduction and intercellular transmission of polarity information during tissue morphogenesis and/or in differentiated tissues. Plays a role in controlling early axon growth and guidance processes necessary for the formation of a subset of central and peripheral major fiber tracts. Involved in the migration of cranial neural crest cells. May also be implicated in the transmission of sensory information from the trunk and limbs to the brain. Controls commissural sensory axons guidance after midline crossing along the anterior-posterior axis in the developing spinal cord in a Wnt-dependent signaling pathway. Together with FZD6, is involved in the neural tube closure and plays a role in the regulation of the establishment of planar cell polarity (PCP). Promotes neurogenesis by maintaining sympathetic neuroblasts within the cell cycle in a beta-catenin-dependent manner. This Xenopus laevis (African clawed frog) protein is Frizzled-3 (fzd3).